The following is a 65-amino-acid chain: Small ribosomal subunit protein uS10 (65 aa).

Belongs to the universal ribosomal protein uS10 family. In terms of assembly, part of the 30S ribosomal subunit.

Its function is as follows. Involved in the binding of tRNA to the ribosomes. This Desulfurococcus mucosus (Desulfurococcus mobilis) protein is Small ribosomal subunit protein uS10 (rps10).